The sequence spans 77 residues: Large ribosomal subunit protein uL29 (77 aa).

It belongs to the universal ribosomal protein uL29 family.

The protein is Large ribosomal subunit protein uL29 of Corynebacterium urealyticum (strain ATCC 43042 / DSM 7109).